Here is a 710-residue protein sequence, read N- to C-terminus: Putative membrane protein IgaA homolog (710 aa).

A topological domain (periplasmic) is located at residue Met1. Residues 2–22 form a helical membrane-spanning segment; it reads STILIFIAALLACSLLAIWRF. The Cytoplasmic portion of the chain corresponds to 23–204; it reads RVKSRRGSLP…YALSRPAGLR (182 aa). 2 helical membrane passes run 205 to 225 and 226 to 246; these read EALL…TPDV and FVPW…WGLF. The Cytoplasmic segment spans residues 247-339; it reads APPSKSALRE…KNFPLQHWLR (93 aa). A helical membrane pass occupies residues 340 to 360; the sequence is STVIAIGSLLVLFMLLFWIPL. At 361–656 the chain is on the periplasmic side; the sequence is DMPIKFTLSW…PDKSGWWRYL (296 aa). A helical membrane pass occupies residues 657 to 677; the sequence is GTTLLMLAMIVSAVYNGIQAF. Over 678–710 the chain is Cytoplasmic; sequence RRYQRHRTRMADIQEYYESCLNPRLTVSPENLI.

It belongs to the IgaA family.

It is found in the cell inner membrane. The sequence is that of Putative membrane protein IgaA homolog (yrfF) from Salmonella typhi.